A 568-amino-acid polypeptide reads, in one-letter code: DEAD-box ATP-dependent RNA helicase 51 (568 aa).

Composition is skewed to basic and acidic residues over residues 1 to 13 (MVES…EELK) and 23 to 47 (KKNE…TQKK). The disordered stretch occupies residues 1–70 (MVESDKSSVE…EEEEKVEAME (70 aa)). Positions 13 to 78 (KKRVRKRSRG…MEDGEDEKNI (66 aa)) form a coiled coil. The segment covering 60-70 (EEEEEKVEAME) has biased composition (acidic residues). A Q motif motif is present at residues 89–117 (VTFDSLDLSEQTSIAIKEMGFQYMTQIQA). Positions 120-295 (IQPLLEGKDV…RVSLTSPVHV (176 aa)) constitute a Helicase ATP-binding domain. 133–140 (ARTGSGKT) lines the ATP pocket. The DEAD box signature appears at 243–246 (DEAD). In terms of domain architecture, Helicase C-terminal spans 321-468 (RLILLISFLK…ELEFNEKRLS (148 aa)). Positions 540 to 568 (KVRKARKQQGRNGFSPYSPYGKSTPTKEA) are disordered.

It belongs to the DEAD box helicase family. DDX18/HAS1 subfamily.

The catalysed reaction is ATP + H2O = ADP + phosphate + H(+). This Arabidopsis thaliana (Mouse-ear cress) protein is DEAD-box ATP-dependent RNA helicase 51 (RH51).